Here is a 331-residue protein sequence, read N- to C-terminus: Olfactory receptor 7E178 (331 aa).

Topologically, residues 1–47 (MMDRYSFIMHQHRDDTVWCPSKIEEQNITRISEFHLMGLSDDLQLQP) are extracellular. N-linked (GlcNAc...) asparagine glycosylation occurs at Asn-27. A helical transmembrane segment spans residues 48–68 (ILFGLFLSMYLVTLLGNLLII). Over 69 to 80 (LTVSSDSHLHSP) the chain is Cytoplasmic. The helical transmembrane segment at 81–100 (MYFFLSNLSLADVSFTSTTL) threads the bilayer. Residues 101 to 119 (PKMIVDIQTHNRAISYSGC) are Extracellular-facing. Cysteines 119 and 201 form a disulfide. The chain crosses the membrane as a helical span at residues 120–140 (LTQMSFFMLFGCLDSLLLTAM). The Cytoplasmic segment spans residues 141 to 164 (AYDRFVAICHPLHYQFIMNPRLCG). A helical transmembrane segment spans residues 165 to 185 (LLVFLSVLISLFVSQLHNSVV). At 186 to 218 (LQLTYFKSVDISHFFCDPSQLLNLACSDTFTNN) the chain is on the extracellular side. A helical transmembrane segment spans residues 219 to 239 (IVMYFVGAISGFLPISGIFFS). Over 240–266 (YYKIVSSILRMPSPGGKYKAFSTCGSH) the chain is Cytoplasmic. A helical transmembrane segment spans residues 267–287 (LSVVCLFYGTGLGVYLSSAVS). Over 288-293 (LSPRKG) the chain is Extracellular. The helical transmembrane segment at 294-314 (AVASIVYTVVTPMLNPFIYSL) threads the bilayer. Residues 315–331 (RNQDIKRAMWRLLRKTV) lie on the Cytoplasmic side of the membrane.

The protein belongs to the G-protein coupled receptor 1 family.

It localises to the cell membrane. Its function is as follows. Odorant receptor. This Mus musculus (Mouse) protein is Olfactory receptor 7E178.